We begin with the raw amino-acid sequence, 176 residues long: NAD(P)H-quinone oxidoreductase subunit J (176 aa).

The protein belongs to the complex I 30 kDa subunit family. As to quaternary structure, NDH-1 can be composed of about 15 different subunits; different subcomplexes with different compositions have been identified which probably have different functions.

Its subcellular location is the cellular thylakoid membrane. The catalysed reaction is a plastoquinone + NADH + (n+1) H(+)(in) = a plastoquinol + NAD(+) + n H(+)(out). The enzyme catalyses a plastoquinone + NADPH + (n+1) H(+)(in) = a plastoquinol + NADP(+) + n H(+)(out). Functionally, NDH-1 shuttles electrons from an unknown electron donor, via FMN and iron-sulfur (Fe-S) centers, to quinones in the respiratory and/or the photosynthetic chain. The immediate electron acceptor for the enzyme in this species is believed to be plastoquinone. Couples the redox reaction to proton translocation, and thus conserves the redox energy in a proton gradient. Cyanobacterial NDH-1 also plays a role in inorganic carbon-concentration. In Nostoc punctiforme (strain ATCC 29133 / PCC 73102), this protein is NAD(P)H-quinone oxidoreductase subunit J.